The primary structure comprises 61 residues: DNA-directed RNA polymerase subunit Rpo10 (61 aa).

Zn(2+) contacts are provided by Cys6, Cys9, Cys42, and Cys43.

Belongs to the archaeal Rpo10/eukaryotic RPB10 RNA polymerase subunit family. As to quaternary structure, part of the RNA polymerase complex. It depends on Zn(2+) as a cofactor.

The protein localises to the cytoplasm. The catalysed reaction is RNA(n) + a ribonucleoside 5'-triphosphate = RNA(n+1) + diphosphate. Its function is as follows. DNA-dependent RNA polymerase (RNAP) catalyzes the transcription of DNA into RNA using the four ribonucleoside triphosphates as substrates. In Methanothrix thermoacetophila (strain DSM 6194 / JCM 14653 / NBRC 101360 / PT) (Methanosaeta thermophila), this protein is DNA-directed RNA polymerase subunit Rpo10.